A 465-amino-acid chain; its full sequence is Mothers against decapentaplegic homolog 5 (465 aa).

Threonine 2 is modified (N-acetylthreonine). An MH1 domain is found at 13-137 (PAVKRLLGWK…YKRVESPVLP (125 aa)). Residues cysteine 65, cysteine 110, cysteine 122, and histidine 127 each contribute to the Zn(2+) site. The interval 163-251 (NEPHMPQNAT…DTSSNMIPQT (89 aa)) is disordered. The segment covering 169–182 (QNATFPDSFHQPNN) has biased composition (polar residues). Residues 186-197 (PLSPNSPYPPSP) show a composition bias toward pro residues. The segment covering 198 to 214 (ASSTYPNSPASSGPGSP) has biased composition (low complexity). The span at 237-251 (NSQPMDTSSNMIPQT) shows a compositional bias: polar residues. The MH2 domain maps to 271 to 465 (WCSIVYYELN…SPLNPISSVS (195 aa)). Serine 463 and serine 465 each carry phosphoserine.

The protein belongs to the dwarfin/SMAD family. Homodimer. Forms trimers with the co-SMAD SMAD4. Interacts with PEBP2-alpha subunit and SMURF1. Interacts with SUV39H1 and SUV39H2. Interacts (via MH2 domain) with LEMD3. Interacts with WWP1. Interacts with TMEM119. Interacts with ZNF8. Interacts with RANBP3L. Interacts with HK1. Interacts with HGS; this interaction attenuates BMP signaling. Post-translationally, phosphorylated on serine by BMP (bone morphogenetic proteins) type 1 receptor kinase. In terms of processing, ubiquitin-mediated proteolysis by SMAD-specific E3 ubiquitin ligase SMURF1. Predominantly expressed in mesenchyme and somites during embryogenesis, and present in many tissues of the adult.

It localises to the cytoplasm. The protein resides in the nucleus. The protein localises to the mitochondrion. Its function is as follows. Transcriptional regulator that plays a role in various cellular processes including embryonic development, cell differentiation, angiogenesis and tissue homeostasis. Upon BMP ligand binding to their receptors at the cell surface, is phosphorylated by activated type I BMP receptors (BMPRIs) and associates with SMAD4 to form a heteromeric complex which translocates into the nucleus acting as transcription factor. In turn, the hetero-trimeric complex recognizes cis-regulatory elements containing Smad Binding Elements (SBEs) to modulate the outcome of the signaling network. Non-phosphorylated SMAD5 has a cytoplasmic role in energy metabolism regulation by promoting mitochondrial respiration and glycolysis in response to cytoplasmic pH changes. Mechanistically, interacts with hexokinase 1/HK1 and thereby accelerates glycolysis. The chain is Mothers against decapentaplegic homolog 5 (Smad5) from Mus musculus (Mouse).